The following is a 705-amino-acid chain: Polyribonucleotide nucleotidyltransferase (705 aa).

2 residues coordinate Mg(2+): D494 and D500. The KH domain occupies 561-620; sequence PRITTVKVKPEKVRAVIGTGGKNIRQIVSETGVTIDVEDDGTVTIASSDMEASARAIAMV. Positions 630 to 698 constitute an S1 motif domain; the sequence is GKIYRGTVKK…KQGKIRLSRK (69 aa).

It belongs to the polyribonucleotide nucleotidyltransferase family. The cofactor is Mg(2+).

Its subcellular location is the cytoplasm. The catalysed reaction is RNA(n+1) + phosphate = RNA(n) + a ribonucleoside 5'-diphosphate. In terms of biological role, involved in mRNA degradation. Catalyzes the phosphorolysis of single-stranded polyribonucleotides processively in the 3'- to 5'-direction. This chain is Polyribonucleotide nucleotidyltransferase, found in Syntrophus aciditrophicus (strain SB).